A 149-amino-acid chain; its full sequence is Large ribosomal subunit protein bL9 (149 aa).

It belongs to the bacterial ribosomal protein bL9 family.

In terms of biological role, binds to the 23S rRNA. The sequence is that of Large ribosomal subunit protein bL9 from Actinobacillus succinogenes (strain ATCC 55618 / DSM 22257 / CCUG 43843 / 130Z).